We begin with the raw amino-acid sequence, 524 residues long: Putative ribose/galactose/methyl galactoside import ATP-binding protein 1 (524 aa).

2 ABC transporter domains span residues 29-270 and 280-524; these read LEMR…VGRT and VPIG…TGGH. Residue 61-68 participates in ATP binding; the sequence is GENGAGKS.

Belongs to the ABC transporter superfamily. Carbohydrate importer 2 (CUT2) (TC 3.A.1.2) family.

It localises to the cell inner membrane. It carries out the reaction D-ribose(out) + ATP + H2O = D-ribose(in) + ADP + phosphate + H(+). The catalysed reaction is D-galactose(out) + ATP + H2O = D-galactose(in) + ADP + phosphate + H(+). Part of an ABC transporter complex involved in carbohydrate import. Could be involved in ribose, galactose and/or methyl galactoside import. Responsible for energy coupling to the transport system. The protein is Putative ribose/galactose/methyl galactoside import ATP-binding protein 1 of Rhizobium etli (strain ATCC 51251 / DSM 11541 / JCM 21823 / NBRC 15573 / CFN 42).